A 162-amino-acid chain; its full sequence is Dihydrofolate reductase (162 aa).

Residues K3 to G161 enclose the DHFR domain. A substrate-binding site is contributed by I7–A9. NADP(+) is bound by residues A8 to A9 and I16 to A21. Residue D29 coordinates substrate. G45 to T48 contributes to the NADP(+) binding site. Position 60 (R60) interacts with substrate. NADP(+) contacts are provided by residues I65 to Q68 and M98 to I103. Substrate is bound at residue T117.

Belongs to the dihydrofolate reductase family.

The enzyme catalyses (6S)-5,6,7,8-tetrahydrofolate + NADP(+) = 7,8-dihydrofolate + NADPH + H(+). The protein operates within cofactor biosynthesis; tetrahydrofolate biosynthesis; 5,6,7,8-tetrahydrofolate from 7,8-dihydrofolate: step 1/1. Key enzyme in folate metabolism. Catalyzes an essential reaction for de novo glycine and purine synthesis, and for DNA precursor synthesis. In Neisseria gonorrhoeae, this protein is Dihydrofolate reductase (folA).